We begin with the raw amino-acid sequence, 475 residues long: MTTLPPLPMTRPKLTALARQKLPCSSRKIPRSQLIKEKDDIDHYLEVNFKGLSKEEVAAYRNSYKKNICVDMLRDGYHKSFTELFALMERWDALREAARVRSLFWLQKPLEEQPDKLDYLYHYLTRAEDAERKESFEDVHNNLYALACYFNNSEDKWVRNHFYERCFKIAQLIKIDCGKKEAEAHMHMGLLYEEDGQLLEAAEHYEAFHQLTQGRIWKDETGRSLNLLACESLLRTYRLLSDKMLENKEYKQAIKILIKASEIAKEGSDKKMEAEASYYLGLAHLAAEEYETALTVLDTYCKISTDLDDDLSLGRGYEAIAKVLQSQGEMTEAIKYLKKFVKIARNNFQSLDLVRASTMLGDIYNEKGYYNKASECFQQAFDTTVELMSMPLMDETKVHYGIAKAHQMMLTVNNYIESADLTSLNYLLSWKESRGNIEPDPVTEEFRGSTVEAVSQNSERLEELSRFPGDQKNET.

TPR repeat units follow at residues 92-131 (DALR…EDAE), 136-173 (FEDV…AQLI), 182-215 (AEAH…TQGR), 234-267 (LRTY…AKEG), 274-307 (AEAS…STDL), 314-347 (GRGY…ARNN), and 354-387 (VRAS…TVEL). Residues 437-475 (IEPDPVTEEFRGSTVEAVSQNSERLEELSRFPGDQKNET) form a disordered region. Positions 459 to 475 (ERLEELSRFPGDQKNET) are enriched in basic and acidic residues.

In terms of tissue distribution, expressed in spermatozoa (at protein level).

The protein localises to the cytoplasm. Its subcellular location is the cytoskeleton. It localises to the flagellum axoneme. In terms of biological role, axonemal protein which is implicated in axonemal and/or peri-axonemal structure assembly and regulates flagellum assembly and beating and therefore sperm motility. This is Tetratricopeptide repeat protein 29 (TTC29) from Homo sapiens (Human).